A 388-amino-acid chain; its full sequence is Zinc finger protein ubi-d4 A (388 aa).

The segment at 60–190 is disordered; that stretch reads GPGSAPGQLY…AKGKGIGSAR (131 aa). Composition is skewed to basic and acidic residues over residues 97-107 and 123-137; these read PDPEQMLKKEG and DPIE…RDDD. Residues 156–170 show a composition bias toward acidic residues; it reads PDDFLDDLDDEDYEE. The C2H2-type zinc finger occupies 205–228; the sequence is YACDICGKRYKNRPGLSYHYAHSH. The disordered stretch occupies residues 233-264; it reads EGAGAEDKEDSQPPTPIMHRPEEQKSKKGPDG. A compositionally biased stretch (basic and acidic residues) spans 251 to 262; the sequence is HRPEEQKSKKGP. PHD-type zinc fingers lie at residues 269–329 and 326–376; these read NNYC…CKCC and CKCC…CLDL.

This sequence belongs to the requiem/DPF family.

It is found in the cytoplasm. The protein localises to the nucleus. In terms of biological role, may be a transcription factor required for the apoptosis response following survival factor withdrawal from myeloid cells. Might also have a role in the development and maturation of lymphoid cells. This is Zinc finger protein ubi-d4 A (req-a) from Xenopus laevis (African clawed frog).